The following is an 834-amino-acid chain: U-box domain-containing protein 33 (834 aa).

The tract at residues Phe232–Asp308 is disordered. Composition is skewed to polar residues over residues Ser243–Asn273 and Ser284–Met293. Residues Leu334–Leu462 adopt a coiled-coil conformation. In terms of domain architecture, Protein kinase spans Phe481–Arg744. ATP-binding positions include Ile487–Ile495 and Lys508. Residue Asp603 is the Proton acceptor of the active site. In terms of domain architecture, U-box spans Ile762 to Leu834.

The protein belongs to the protein kinase superfamily. Ser/Thr protein kinase family.

It catalyses the reaction L-seryl-[protein] + ATP = O-phospho-L-seryl-[protein] + ADP + H(+). The catalysed reaction is L-threonyl-[protein] + ATP = O-phospho-L-threonyl-[protein] + ADP + H(+). It carries out the reaction S-ubiquitinyl-[E2 ubiquitin-conjugating enzyme]-L-cysteine + [acceptor protein]-L-lysine = [E2 ubiquitin-conjugating enzyme]-L-cysteine + N(6)-ubiquitinyl-[acceptor protein]-L-lysine.. The protein operates within protein modification; protein ubiquitination. Its function is as follows. Functions as an E3 ubiquitin ligase. The polypeptide is U-box domain-containing protein 33 (PUB33) (Arabidopsis thaliana (Mouse-ear cress)).